Reading from the N-terminus, the 405-residue chain is Amino acid transporter AVT1I (405 aa).

11 helical membrane passes run 22 to 42 (CFNA…YSLA), 46 to 66 (WLSL…SLLI), 93 to 113 (IIVS…FLIL), 140 to 160 (FMAT…LSVL), 169 to 189 (LATT…GIGF), 201 to 221 (IPTA…LPTL), 234 to 254 (VLLI…VLGY), 278 to 298 (VAIY…ITPT), 318 to 338 (LLIS…LPFF), 343 to 363 (SLVG…LCYL), and 377 to 397 (IMLF…TYIA).

Belongs to the amino acid/polyamine transporter 2 family. Amino acid/auxin permease (AAAP) (TC 2.A.18.5) subfamily.

The protein resides in the membrane. The polypeptide is Amino acid transporter AVT1I (Arabidopsis thaliana (Mouse-ear cress)).